We begin with the raw amino-acid sequence, 886 residues long: Alanine--tRNA ligase (886 aa).

Residues H564, H568, C666, and H670 each contribute to the Zn(2+) site.

This sequence belongs to the class-II aminoacyl-tRNA synthetase family. Zn(2+) serves as cofactor.

It localises to the cytoplasm. It catalyses the reaction tRNA(Ala) + L-alanine + ATP = L-alanyl-tRNA(Ala) + AMP + diphosphate. Catalyzes the attachment of alanine to tRNA(Ala) in a two-step reaction: alanine is first activated by ATP to form Ala-AMP and then transferred to the acceptor end of tRNA(Ala). Also edits incorrectly charged Ser-tRNA(Ala) and Gly-tRNA(Ala) via its editing domain. This is Alanine--tRNA ligase from Prochlorococcus marinus (strain MIT 9301).